Reading from the N-terminus, the 43-residue chain is Neurotrophic factor BDNF (43 aa).

This sequence belongs to the NGF-beta family.

It is found in the secreted. Promotes the survival of neuronal populations that are all located either in the central nervous system or directly connected to it. This Raja clavata (Thornback ray) protein is Neurotrophic factor BDNF (bdnf).